Here is a 511-residue protein sequence, read N- to C-terminus: Histidine ammonia-lyase (511 aa).

Residues 142-144 (ASG) constitute a cross-link (5-imidazolinone (Ala-Gly)). 2,3-didehydroalanine (Ser) is present on Ser143.

The protein belongs to the PAL/histidase family. Contains an active site 4-methylidene-imidazol-5-one (MIO), which is formed autocatalytically by cyclization and dehydration of residues Ala-Ser-Gly.

The protein resides in the cytoplasm. It catalyses the reaction L-histidine = trans-urocanate + NH4(+). Its pathway is amino-acid degradation; L-histidine degradation into L-glutamate; N-formimidoyl-L-glutamate from L-histidine: step 1/3. This chain is Histidine ammonia-lyase, found in Rhizobium rhizogenes (Agrobacterium rhizogenes).